Reading from the N-terminus, the 300-residue chain is Sulfate adenylyltransferase subunit 2 (300 aa).

This sequence belongs to the PAPS reductase family. CysD subfamily. Heterodimer composed of CysD, the smaller subunit, and CysN.

It catalyses the reaction sulfate + ATP + H(+) = adenosine 5'-phosphosulfate + diphosphate. Its pathway is sulfur metabolism; hydrogen sulfide biosynthesis; sulfite from sulfate: step 1/3. In terms of biological role, with CysN forms the ATP sulfurylase (ATPS) that catalyzes the adenylation of sulfate producing adenosine 5'-phosphosulfate (APS) and diphosphate, the first enzymatic step in sulfur assimilation pathway. APS synthesis involves the formation of a high-energy phosphoric-sulfuric acid anhydride bond driven by GTP hydrolysis by CysN coupled to ATP hydrolysis by CysD. In Magnetococcus marinus (strain ATCC BAA-1437 / JCM 17883 / MC-1), this protein is Sulfate adenylyltransferase subunit 2.